The chain runs to 82 residues: Penaeidin-3f (82 aa).

An N-terminal signal peptide occupies residues 1-19; it reads MRLVACLVFLASFALVCQG. Residue Gln-20 is modified to Pyrrolidone carboxylic acid. 3 disulfides stabilise this stretch: Cys-51-Cys-66, Cys-55-Cys-73, and Cys-67-Cys-74. Ser-81 is modified (serine amide).

The protein belongs to the penaeidin family.

The protein localises to the cytoplasmic granule. Antibacterial and antifungal activity. Presents chitin-binding activity. This Penaeus vannamei (Whiteleg shrimp) protein is Penaeidin-3f.